Consider the following 334-residue polypeptide: Pantothenate synthetase (334 aa).

34 to 41 lines the ATP pocket; the sequence is MGALHEGH. His-41 serves as the catalytic Proton donor. Residue Gln-71 participates in (R)-pantoate binding. Gln-71 contacts beta-alanine. 158 to 161 contributes to the ATP binding site; the sequence is GQKD. Position 164 (Gln-164) interacts with (R)-pantoate. Residues Val-187 and 195-198 each bind ATP; that span reads LSSR. The segment at 288–334 is disordered; the sequence is PLMLGTRGPAGEASPPNRERSEPGSAEQNKSPGEARTTPSGTSEASE. The segment covering 313-334 has biased composition (polar residues); the sequence is AEQNKSPGEARTTPSGTSEASE.

It belongs to the pantothenate synthetase family. In terms of assembly, homodimer.

The protein localises to the cytoplasm. It carries out the reaction (R)-pantoate + beta-alanine + ATP = (R)-pantothenate + AMP + diphosphate + H(+). The protein operates within cofactor biosynthesis; (R)-pantothenate biosynthesis; (R)-pantothenate from (R)-pantoate and beta-alanine: step 1/1. In terms of biological role, catalyzes the condensation of pantoate with beta-alanine in an ATP-dependent reaction via a pantoyl-adenylate intermediate. The sequence is that of Pantothenate synthetase from Nocardioides sp. (strain ATCC BAA-499 / JS614).